The chain runs to 2148 residues: Polyketide synthase 1 (2148 aa).

Residues 19 to 261 (FIFGDQSSCN…TPLAVHAPYH (243 aa)) are N-terminal acylcarrier protein transacylase domain (SAT). Residues 394–829 (ESKIAIIGMS…GGNTALLVED (436 aa)) form the Ketosynthase family 3 (KS3) domain. Active-site for beta-ketoacyl synthase activity residues include Cys566, His701, and His745. The tract at residues 930–1236 (FVFSGQGSQY…MRNKDGWQVL (307 aa)) is malonyl-CoA:ACP transacylase (MAT) domain. Ser1018 functions as the For acyl/malonyl transferase activity in the catalytic mechanism. The product template (PT) domain stretch occupies residues 1310–1624 (TASVHRMVHE…RKVLNTAMPP (315 aa)). Residues 1314 to 1447 (HRMVHESVEK…SSLHFEQPKV (134 aa)) are N-terminal hotdog fold. Positions 1314-1619 (HRMVHESVEK…FQGIPRKVLN (306 aa)) constitute a PKS/mFAS DH domain. His1346 acts as the Proton acceptor; for dehydratase activity in catalysis. The tract at residues 1474-1619 (LNSRMSSGVI…FQGIPRKVLN (146 aa)) is C-terminal hotdog fold. Catalysis depends on Asp1533, which acts as the Proton donor; for dehydratase activity. The disordered stretch occupies residues 1619–1655 (NTAMPPPKSQNEAPVRSGPAKPAAKPPRSASSEHSGH). The segment covering 1634–1650 (RSGPAKPAAKPPRSASS) has biased composition (low complexity). The Carrier 1 domain occupies 1678-1752 (RNPMLPVFKI…DLAAQLGLDT (75 aa)). Ser1712 carries the O-(pantetheine 4'-phosphoryl)serine modification. Residues 1755 to 1790 (SDQSSGQSSSSGGLSPRSDSIGEITSSVTTPPSLSP) show a composition bias toward low complexity. The interval 1755-1796 (SDQSSGQSSSSGGLSPRSDSIGEITSSVTTPPSLSPRGSVSG) is disordered. Residues 1793–1870 (SVSGSQCKDV…SFKHMFQQGH (78 aa)) form the Carrier 2 domain. The residue at position 1830 (Ser1830) is an O-(pantetheine 4'-phosphoryl)serine. Positions 1882 to 2146 (LKQYRATSTL…ERVAAFIRST (265 aa)) are thioesterase (TE) domain. Catalysis depends on Ser1973, which acts as the For thioesterase activity.

Its pathway is pigment biosynthesis. Polyketide synthase; part of the Pks1 gene cluster that mediates the biosynthesis of an anthraquinone derivative pigment that contributes to conidial pigmentation that provides protection from UV radiation, heat and cold stress. The polyketide synthase Pks1 produces 1-acetyl-2,4,6,8-tetrahydroxy-9,10-anthraquinone though condensation of acetyl-CoA with malonyl-CoA. The dehydratase EthD and the laccase Mlac1 further convert the anthraquinone derivative into the final conidial pigment. The protein is Polyketide synthase 1 of Metarhizium robertsii (strain ARSEF 23 / ATCC MYA-3075) (Metarhizium anisopliae (strain ARSEF 23)).